The primary structure comprises 379 residues: Alcohol dehydrogenase 2 (379 aa).

Positions 47, 49, 69, 99, 102, 105, 113, and 177 each coordinate Zn(2+). An alcohol contacts are provided by Thr-49 and His-69. Thr-49 is a binding site for NAD(+). Residues 202–207 (GLGAVG), Asp-226, Lys-231, Thr-272, Val-295, 295–297 (VGV), Phe-322, and Arg-372 contribute to the NAD(+) site.

The protein belongs to the zinc-containing alcohol dehydrogenase family. Homodimer. The cofactor is Zn(2+).

It localises to the cytoplasm. The enzyme catalyses a primary alcohol + NAD(+) = an aldehyde + NADH + H(+). It carries out the reaction a secondary alcohol + NAD(+) = a ketone + NADH + H(+). This chain is Alcohol dehydrogenase 2 (ADH2), found in Oryza sativa subsp. indica (Rice).